A 643-amino-acid chain; its full sequence is Transmembrane 9 superfamily member 4 (643 aa).

The signal sequence occupies residues 1–23 (MAAAMIWWPRFLLLLCLTCKGST). Topologically, residues 24–282 (FYVPGVAPIN…TMSDVQIHWF (259 aa)) are extracellular. A helical membrane pass occupies residues 283–303 (SIINSVVVVFFLSGILSMIII). Topologically, residues 304 to 347 (RTLRKDIANYNKEDDIEDTMEESGWKLVHGDVFRPPQYPMILSS) are cytoplasmic. Tyr-313 bears the Phosphotyrosine mark. The chain crosses the membrane as a helical span at residues 348–368 (LLGSGIQLFCMILIVIFVAML). Residues 369-377 (GMLSPSSRG) are Extracellular-facing. The helical transmembrane segment at 378–398 (ALMTTACFLFMFMGVFGGFSA) threads the bilayer. The Cytoplasmic portion of the chain corresponds to 399-417 (GRLYRTLKGHRWKKGAFCT). The helical transmembrane segment at 418-438 (ATLYPGVVFGICFVLNCFIWG) threads the bilayer. The Extracellular portion of the chain corresponds to 439 to 450 (KHSSGAVPFPTM). A helical membrane pass occupies residues 451-471 (VALLCMWFGISLPLVYLGYYF). At 472-502 (GFRKQPYDNPVRTNQIPRQIPEQRWYMNRFV) the chain is on the cytoplasmic side. The chain crosses the membrane as a helical span at residues 503–523 (GILMAGILPFGAMFIELFFIF). At 524-536 (SAIWENQFYYLFG) the chain is on the extracellular side. Residues 537 to 557 (FLFLVFIILVVSCSQISIVMV) traverse the membrane as a helical segment. At 558–571 (YFQLCAEDYRWWWR) the chain is on the cytoplasmic side. A helical transmembrane segment spans residues 572–592 (NFLVSGGSAFYVLVYAIFYFV). The Extracellular segment spans residues 593 to 599 (NKLDIVE). The chain crosses the membrane as a helical span at residues 600 to 620 (FIPSLLYFGYTTLMVLSFWLL). Residues 621–643 (TGTIGFYAAYMFVRKIYAAVKID) lie on the Cytoplasmic side of the membrane.

It belongs to the nonaspanin (TM9SF) (TC 9.A.2) family.

It is found in the membrane. The protein localises to the golgi apparatus. It localises to the early endosome. Functionally, associates with proteins harboring glycine-rich transmembrane domains and ensures their efficient localization to the cell surface. The protein is Transmembrane 9 superfamily member 4 (Tm9sf4) of Mus musculus (Mouse).